The primary structure comprises 65 residues: Large ribosomal subunit protein bL35 (65 aa).

Residues 1–29 (MPKMKTNRGAAKRFKKTGSGRIKRGKAFT) are disordered. Residues 10–26 (AAKRFKKTGSGRIKRGK) show a composition bias toward basic residues.

This sequence belongs to the bacterial ribosomal protein bL35 family.

This chain is Large ribosomal subunit protein bL35, found in Desulfotalea psychrophila (strain LSv54 / DSM 12343).